Reading from the N-terminus, the 2598-residue chain is Partially reducing polyketide synthase men1 (2598 aa).

The 429-residue stretch at 7 to 435 folds into the Ketosynthase family 3 (KS3) domain; the sequence is SQSIAIVGLS…GSNAHAILDD (429 aa). Residues Cys181, His316, and His358 each act as for beta-ketoacyl synthase activity in the active site. Basic residues predominate over residues 450 to 459; the sequence is GKSHHHHHQH. Disordered stretches follow at residues 450–490 and 537–557; these read GKSH…NGTT and AEKQ…DPEK. Residues 474 to 490 show a composition bias toward low complexity; sequence VNGTSEVNGTSGVNGTT. The 305-residue stretch at 611–915 folds into the Malonyl-CoA:ACP transacylase (MAT) domain; the sequence is YVFTGQGAQW…RGPVTQILQS (305 aa). Positions 1008–1151 are N-terminal hotdog fold; that stretch reads LGLIGAPMPN…GSVAVEFGAL (144 aa). Positions 1008-1325 constitute a PKS/mFAS DH domain; it reads LGLIGAPMPN…CVEMPSASGM (318 aa). Residues 1009–1323 form a dehydratase (DH) domain region; that stretch reads GLIGAPMPNF…LVCVEMPSAS (315 aa). The tract at residues 1169–1325 is C-terminal hotdog fold; sequence TISQEVDVFY…CVEMPSASGM (157 aa). Residues 1886–2197 enclose the Enoyl reductase (ER) domain; the sequence is GMLNTLCFEI…ARSRQDKIVI (312 aa). In terms of domain architecture, Ketoreductase (KR) spans 2222 to 2399; sequence TYLIAGGLGG…AATIDLGIVK (178 aa). The Carrier domain occupies 2510 to 2587; it reads EAARLVSAAV…AFASDLAKKG (78 aa). Ser2547 is subject to O-(pantetheine 4'-phosphoryl)serine.

Pantetheine 4'-phosphate is required as a cofactor.

It functions in the pathway secondary metabolite biosynthesis. Its function is as follows. Partially reducing polyketide synthase; part of the gene cluster that mediates the biosynthesis of menisporopsin A, a bioactive macrocyclic polylactone. The biosynthesis of menisporopsin A is performed by a reducing (man1) and a non-reducing (men2) polyketide synthase that catalyze the formation of each menisporopsin A subunits, while the esterification and cyclolactonization activities are probably peformed by the unusual thioesterase domain of men2. First, a reduced diketide intermediate, 3-hydroxybutyryl-S-ACP is produced by men1 and transferred to men2; this is followed by a second reduced diketide which is further elongated using 3 units of malonyl-coA to form a reduced pentaketide. The cyclization of this intermediate by the PT domain forms the second subunit, 2,4-dihydroxy-6-(2-hydroxy-n-propyl)benzoyl-S-ACP. The TE domain of men2 then esterifies the secondary hydroxyl group on the side chain of the second subunit with the acyl-TE of the first subunit to form the first ester intermediate. This process occurs iteratively to form a linear tetraester intermediate. The final subunit is formed by a similar process, except that an extra malonyl-CoA is required in an additional elongation step to form a reduced hexaketide intermediate, and the carbonyl group next to the secondary hydroxyl group is reduced by a trans-acting ketoreductase. Again, the PT domain catalyzes cyclization to form the largest subunit, 2,4-dihydroxy-6-(2,4-dihydroxy-n-pentyl) benzoyl-S-ACP. Then the linear pentaester intermediate is formed. In this step, if the intermediate transfer rate is slow, intra- molecular cyclization involving the secondary hydroxyl group of the pentaester intermediate may occur to form menisporopsin B. Alternatively, transfer of the pentaester intermediate to the TE domain would allow cyclolactonization to be catalyzed by the TE to form menisporopsin A. The sequence is that of Partially reducing polyketide synthase men1 from Menisporopsis theobromae.